The primary structure comprises 363 residues: 3-dehydroquinate synthase (363 aa).

Residues 107-111 (GVIGD), 131-132 (TT), Lys-144, and Lys-153 contribute to the NAD(+) site. Residues Glu-186, His-251, and His-268 each coordinate Zn(2+).

Belongs to the sugar phosphate cyclases superfamily. Dehydroquinate synthase family. The cofactor is Co(2+). Requires Zn(2+) as cofactor. NAD(+) serves as cofactor.

It is found in the cytoplasm. It catalyses the reaction 7-phospho-2-dehydro-3-deoxy-D-arabino-heptonate = 3-dehydroquinate + phosphate. It functions in the pathway metabolic intermediate biosynthesis; chorismate biosynthesis; chorismate from D-erythrose 4-phosphate and phosphoenolpyruvate: step 2/7. In terms of biological role, catalyzes the conversion of 3-deoxy-D-arabino-heptulosonate 7-phosphate (DAHP) to dehydroquinate (DHQ). This is 3-dehydroquinate synthase from Nostoc punctiforme (strain ATCC 29133 / PCC 73102).